We begin with the raw amino-acid sequence, 462 residues long: Chromosomal replication initiator protein DnaA (462 aa).

Positions 1-84 (MAVSLWQQCI…RFDIGSRPSA (84 aa)) are domain I, interacts with DnaA modulators. The tract at residues 84–125 (ARTVQPAPAAPRPTTGHTQTKARVGTAFNIQAEPMANANHRS) is domain II. The segment at 126 to 342 (NINPTYQFDN…GALNRVIANA (217 aa)) is domain III, AAA+ region. The ATP site is built by glycine 170, glycine 172, lysine 173, and threonine 174. The domain IV, binds dsDNA stretch occupies residues 343 to 462 (NFTGRPITID…YANLIRTLSS (120 aa)).

This sequence belongs to the DnaA family. As to quaternary structure, oligomerizes as a right-handed, spiral filament on DNA at oriC.

Its subcellular location is the cytoplasm. Its function is as follows. Plays an essential role in the initiation and regulation of chromosomal replication. ATP-DnaA binds to the origin of replication (oriC) to initiate formation of the DNA replication initiation complex once per cell cycle. Binds the DnaA box (a 9 base pair repeat at the origin) and separates the double-stranded (ds)DNA. Forms a right-handed helical filament on oriC DNA; dsDNA binds to the exterior of the filament while single-stranded (ss)DNA is stabiized in the filament's interior. The ATP-DnaA-oriC complex binds and stabilizes one strand of the AT-rich DNA unwinding element (DUE), permitting loading of DNA polymerase. After initiation quickly degrades to an ADP-DnaA complex that is not apt for DNA replication. Binds acidic phospholipids. This Shewanella denitrificans (strain OS217 / ATCC BAA-1090 / DSM 15013) protein is Chromosomal replication initiator protein DnaA.